The chain runs to 143 residues: Large ribosomal subunit protein uL11 (143 aa).

This sequence belongs to the universal ribosomal protein uL11 family. In terms of assembly, part of the ribosomal stalk of the 50S ribosomal subunit. Interacts with L10 and the large rRNA to form the base of the stalk. L10 forms an elongated spine to which L12 dimers bind in a sequential fashion forming a multimeric L10(L12)X complex. In terms of processing, one or more lysine residues are methylated.

Its function is as follows. Forms part of the ribosomal stalk which helps the ribosome interact with GTP-bound translation factors. The chain is Large ribosomal subunit protein uL11 from Leifsonia xyli subsp. xyli (strain CTCB07).